The primary structure comprises 115 residues: Ig heavy chain V-III region J606 (115 aa).

Residues 1–114 (EVKLEESGGG…WGQGTLVTVS (114 aa)) form the Ig-like domain. An intrachain disulfide couples cysteine 22 to cysteine 98.

The polypeptide is Ig heavy chain V-III region J606 (Mus musculus (Mouse)).